The chain runs to 427 residues: Peptidase B (427 aa).

Lys195 and Asp200 together coordinate Mn(2+). Residue Lys207 is part of the active site. Residues Asp218, Asp277, and Glu279 each contribute to the Mn(2+) site. Arg281 is an active-site residue.

Belongs to the peptidase M17 family. As to quaternary structure, homohexamer. Requires Mn(2+) as cofactor.

It localises to the cytoplasm. It catalyses the reaction Release of an N-terminal amino acid, Xaa, from a peptide or arylamide. Xaa is preferably Glu or Asp but may be other amino acids, including Leu, Met, His, Cys and Gln.. Its function is as follows. Probably plays an important role in intracellular peptide degradation. The polypeptide is Peptidase B (Citrobacter koseri (strain ATCC BAA-895 / CDC 4225-83 / SGSC4696)).